We begin with the raw amino-acid sequence, 221 residues long: Putative adhesin P1-like protein MPN_131 (221 aa).

The span at 13–36 (RYGNNHRGSNSSTSGVTTQGQSQN) shows a compositional bias: low complexity. Disordered regions lie at residues 13-51 (RYGN…NVGV) and 90-183 (GWRN…TPSG). A compositionally biased stretch (polar residues) spans 37–48 (ASSNEPAPTFSN). Residues 130 to 139 (LKQDKADKSG) show a composition bias toward basic and acidic residues. Polar residues-rich tracts occupy residues 149-160 (SGDNLTNYTNLP) and 174-183 (HSPTRTTPSG).

The protein belongs to the adhesin P1 family.

The protein is Putative adhesin P1-like protein MPN_131 of Mycoplasma pneumoniae (strain ATCC 29342 / M129 / Subtype 1) (Mycoplasmoides pneumoniae).